The primary structure comprises 632 residues: Extracellular metalloproteinase 2 (632 aa).

The N-terminal stretch at 1–19 (MHGLLLAGLAAALPLGVAG) is a signal peptide. Positions 20-244 (LPARQQSGLS…VHNVVDYVAS (225 aa)) are excised as a propeptide. Asparagine 270 carries an N-linked (GlcNAc...) asparagine glycan. Histidine 429 contributes to the Zn(2+) binding site. Glutamate 430 is a catalytic residue. Histidine 433 is a binding site for Zn(2+).

It belongs to the peptidase M36 family. Zn(2+) serves as cofactor.

Its subcellular location is the secreted. Secreted metalloproteinase probably acting as a virulence factor. The protein is Extracellular metalloproteinase 2 (MEP2) of Trichophyton rubrum (Athlete's foot fungus).